We begin with the raw amino-acid sequence, 302 residues long: tRNA pseudouridine synthase B (302 aa).

Catalysis depends on Asp-43, which acts as the Nucleophile.

It belongs to the pseudouridine synthase TruB family. Type 1 subfamily.

It carries out the reaction uridine(55) in tRNA = pseudouridine(55) in tRNA. Responsible for synthesis of pseudouridine from uracil-55 in the psi GC loop of transfer RNAs. The protein is tRNA pseudouridine synthase B of Burkholderia mallei (strain NCTC 10247).